Consider the following 911-residue polypeptide: Probable 2-oxoadipate dehydrogenase complex component E1 homolog (911 aa).

Belongs to the alpha-ketoglutarate dehydrogenase family. Requires thiamine diphosphate as cofactor.

Its subcellular location is the mitochondrion. It catalyses the reaction N(6)-[(R)-lipoyl]-L-lysyl-[protein] + 2-oxoadipate + H(+) = N(6)-[(R)-S(8)-glutaryldihydrolipoyl]-L-lysyl-[protein] + CO2. Functionally, 2-oxoadipate dehydrogenase (E1a) component of the 2-oxoadipate dehydrogenase complex (OADHC). Participates in the first step, rate limiting for the overall conversion of 2-oxoadipate (alpha-ketoadipate) to glutaryl-CoA and CO(2) catalyzed by the whole OADHC. Catalyzes the irreversible decarboxylation of 2-oxoadipate via the thiamine diphosphate (ThDP) cofactor and subsequent transfer of the decarboxylated acyl intermediate on an oxidized dihydrolipoyl group that is covalently amidated to the E2 enzyme (dihydrolipoyllysine-residue succinyltransferase or DLST). This Caenorhabditis elegans protein is Probable 2-oxoadipate dehydrogenase complex component E1 homolog.